Reading from the N-terminus, the 227-residue chain is Probable septum site-determining protein MinC (227 aa).

The protein belongs to the MinC family. As to quaternary structure, interacts with MinD and FtsZ.

Its function is as follows. Cell division inhibitor that blocks the formation of polar Z ring septums. Rapidly oscillates between the poles of the cell to destabilize FtsZ filaments that have formed before they mature into polar Z rings. Prevents FtsZ polymerization. The chain is Probable septum site-determining protein MinC from Geobacillus kaustophilus (strain HTA426).